The chain runs to 248 residues: Probable transcriptional regulatory protein RPA1097 (248 aa).

The disordered stretch occupies residues 1–21 (MAGHSQFKNIMHRKGRQDAQR).

The protein belongs to the TACO1 family.

It is found in the cytoplasm. This is Probable transcriptional regulatory protein RPA1097 from Rhodopseudomonas palustris (strain ATCC BAA-98 / CGA009).